Consider the following 398-residue polypeptide: Phosphoglycerate kinase (398 aa).

Residues 21–23 (DFN), Arg-36, 59–62 (HLGR), Arg-119, and Arg-157 contribute to the substrate site. Residues Lys-208, Gly-296, Glu-327, and 354 to 357 (GGDS) contribute to the ATP site.

It belongs to the phosphoglycerate kinase family. In terms of assembly, monomer.

It localises to the cytoplasm. The enzyme catalyses (2R)-3-phosphoglycerate + ATP = (2R)-3-phospho-glyceroyl phosphate + ADP. It participates in carbohydrate degradation; glycolysis; pyruvate from D-glyceraldehyde 3-phosphate: step 2/5. The chain is Phosphoglycerate kinase from Streptococcus mutans serotype c (strain ATCC 700610 / UA159).